We begin with the raw amino-acid sequence, 31 residues long: uncharacterized protein (31 aa).

This is an uncharacterized protein from Caenorhabditis elegans.